Here is a 136-residue protein sequence, read N- to C-terminus: Small ribosomal subunit protein uS9 (136 aa).

Positions 115–136 (KVKERKKPGLRKARKARQFSKR) are disordered. Basic residues predominate over residues 117 to 136 (KERKKPGLRKARKARQFSKR).

The protein belongs to the universal ribosomal protein uS9 family.

The chain is Small ribosomal subunit protein uS9 from Mycoplasmopsis pulmonis (strain UAB CTIP) (Mycoplasma pulmonis).